Reading from the N-terminus, the 926-residue chain is Progesterone receptor (926 aa).

The segment at 1–48 is disordered; that stretch reads MTELQAKDPQVLHTSGASPSPPHIGSPLLARLDSGPFQGSQHSDVSSV. The AF3; mediates transcriptional activation (in isoform B) stretch occupies residues 1–165; it reads MTELQAKDPQ…PATKGLLSPL (165 aa). The segment at 1–559 is modulating, Pro-Rich; the sequence is MTELQAKDPQ…YGFDSLPQKI (559 aa). Residue lysine 7 forms a Glycyl lysine isopeptide (Lys-Gly) (interchain with G-Cter in SUMO) linkage. Residue serine 20 is modified to Phosphoserine. Positions 56–60 match the LXXL motif 1 motif; it reads LDGLL. Residue serine 82 is modified to Phosphoserine. The LXXL motif 1 motif lies at 116–120; it reads LDSLL. Serine 131 and serine 163 each carry phosphoserine. The segment at 166–305 is mediates transcriptional transrepression (in isoform A); that stretch reads MSRPEIKAGD…LATTVVDFIH (140 aa). The interval 168 to 256 is disordered; the sequence is RPEIKAGDSS…GTGSGGGVAA (89 aa). Positions 184 to 188 match the Nuclear localization signal motif; that stretch reads KVLPK. 2 positions are modified to phosphoserine: serine 191 and serine 214. Serine 294 is modified (phosphoserine; by MAPK1). The tract at residues 327 to 364 is disordered; that stretch reads DSYDGGATAQGPFAPPRGSPSAPSPPVPCGDFPDCTYP. Over residues 339–354 the composition is skewed to pro residues; that stretch reads FAPPRGSPSAPSPPVP. Serine 345 is modified (phosphoserine; by MAPK). Residue lysine 388 forms a Glycyl lysine isopeptide (Lys-Gly) (interchain with G-Cter in SUMO); alternate linkage. Residue lysine 388 forms a Glycyl lysine isopeptide (Lys-Gly) (interchain with G-Cter in ubiquitin); alternate linkage. Positions 391–447 are disordered; that stretch reads EEGADAAVRSPRPYLSAGASSSTFPDFPLAPAPQRAPSSRPGEAAVAGGPSSAAVSP. Serine 400 is subject to Phosphoserine; by CDK2. The span at 422–447 shows a compositional bias: low complexity; it reads APQRAPSSRPGEAAVAGGPSSAAVSP. Positions 453 to 539 are AF1; mediates transcriptional activation; it reads SALECILYKA…VYPPYLNYLR (87 aa). Lysine 524 participates in a covalent cross-link: Glycyl lysine isopeptide (Lys-Gly) (interchain with G-Cter in SUMO). A DNA-binding region (nuclear receptor) is located at residues 557–632; it reads QKICLICGDE…AGMVLGGRKF (76 aa). NR C4-type zinc fingers lie at residues 560–580 and 596–615; these read CLICGDEASGCHYGVLTCGSC and CAGRNDCIVDKIRRKNCPAC. Serine 669 is subject to Phosphoserine. One can recognise an NR LBD domain in the interval 672–906; sequence QEIQLVPPLI…EFPEMMSEVI (235 aa). The tract at residues 673–926 is AF2; mediates transcriptional activation; it reads EIQLVPPLIN…MVKPLLFHKK (254 aa). Arginine 759 is a binding site for progesterone.

Belongs to the nuclear hormone receptor family. NR3 subfamily. In terms of assembly, interacts with SMARD1 and UNC45A. Interacts with CUEDC2; the interaction promotes ubiquitination, decreases sumoylation, and represses transcriptional activity. Interacts with PIAS3; the interaction promotes sumoylation of PR in a hormone-dependent manner, inhibits DNA-binding, and alters nuclear export. Interacts with SP1; the interaction requires ligand-induced phosphorylation on Ser-294 by ERK1/2 MAPK. Interacts with PRMT2. Isoform A interacts with NCOR2. Isoform B (but not isoform A) interacts with NCOA2 and NCOA1. Isoform B (but not isoform A) interacts with KLF9. In terms of processing, phosphorylated on multiple serine sites. Several of these sites are hormone-dependent. Phosphorylation on Ser-294 is highly hormone-dependent and modulates ubiquitination and sumoylation on Lys-388. Phosphorylation on Ser-345 also requires induction by hormone. Basal phosphorylation on Ser-82, Ser-163, Ser-191 and Ser-400 is increased in response to progesterone and can be phosphorylated in vitro by the CDK2-A1 complex. Increased levels of phosphorylation on Ser-400 also in the presence of EGF, heregulin, IGF, PMA and FBS. Phosphorylation at this site by CDK2 is ligand-independent, and increases nuclear translocation and transcriptional activity. Phosphorylation at Ser-163 and Ser-294, but not at Ser-191, is impaired during the G(2)/M phase of the cell cycle. Phosphorylation on Ser-345 by ERK1/2 MAPK is required for interaction with SP1. Sumoylation is hormone-dependent and represses transcriptional activity. Sumoylation on all three sites is enhanced by PIAS3. Desumoylated by SENP1. Sumoylation on Lys-388, the main site of sumoylation, is repressed by ubiquitination on the same site, and modulated by phosphorylation at Ser-294. Post-translationally, ubiquitination is hormone-dependent and represses sumoylation on the same site. Promoted by MAPK-mediated phosphorylation on Ser-294. Ubiquitinated by UBR5, leading to its degradation: UBR5 specifically recognizes and binds ligand-bound PGR when it is not associated with coactivators (NCOAs). In presence of NCOAs, the UBR5-degron is not accessible, preventing its ubiquitination and degradation. In terms of processing, palmitoylated by ZDHHC7 and ZDHHC21. Palmitoylation is required for plasma membrane targeting and for rapid intracellular signaling via ERK and AKT kinases and cAMP generation. In terms of tissue distribution, expression of isoform A and isoform B in mammary epithelial cells is temporally and spatially separated during normal mammary gland development. Isoform A and isoform B are expressed in the pituitary. Isoform A and isoform B are differentially expressed in the ovary and oviduct, and the level of expression is dependent on both the cell type and estrous cycle stage.

The protein resides in the nucleus. Its subcellular location is the cytoplasm. The steroid hormones and their receptors are involved in the regulation of eukaryotic gene expression and affect cellular proliferation and differentiation in target tissues. Depending on the isoform, progesterone receptor functions as a transcriptional activator or repressor. Its function is as follows. Ligand-dependent transdominant repressor of steroid hormone receptor transcriptional activity including repression of its isoform B, MR and ER. Transrepressional activity may involve recruitment of corepressor NCOR2. In terms of biological role, transcriptional activator of several progesteron-dependent promoters in a variety of cell types. Involved in activation of SRC-dependent MAPK signaling on hormone stimulation. This chain is Progesterone receptor (Pgr), found in Mus musculus (Mouse).